We begin with the raw amino-acid sequence, 1310 residues long: Clustered mitochondria protein homolog (1310 aa).

Residues 375–619 (DITRSQESYL…RVTPLDVVWQ (245 aa)) form the Clu domain. Residues 662–682 (KAQEDAANKEQPSETTESKEG) are compositionally biased toward basic and acidic residues. 2 disordered regions span residues 662–692 (KAQE…EEAL) and 931–960 (VANG…SRAV). TPR repeat units follow at residues 1033–1066 (AKLY…TERT), 1075–1108 (ILAY…WKII), and 1117–1150 (ITTM…CESL). 2 disordered regions span residues 1245–1266 (VQPQ…ANAS) and 1281–1310 (GGDA…KSSA).

The protein belongs to the CLU family. In terms of assembly, may associate with the eukaryotic translation initiation factor 3 (eIF-3) complex.

It is found in the cytoplasm. MRNA-binding protein involved in proper cytoplasmic distribution of mitochondria. This chain is Clustered mitochondria protein homolog, found in Aspergillus fumigatus (strain CBS 144.89 / FGSC A1163 / CEA10) (Neosartorya fumigata).